The following is a 506-amino-acid chain: Maturase K (506 aa).

The protein belongs to the intron maturase 2 family. MatK subfamily.

Its subcellular location is the plastid. It localises to the chloroplast. Its function is as follows. Usually encoded in the trnK tRNA gene intron. Probably assists in splicing its own and other chloroplast group II introns. In Angiopteris evecta (Mule's foot fern), this protein is Maturase K.